We begin with the raw amino-acid sequence, 295 residues long: Foldase protein PrsA (295 aa).

An N-terminal signal peptide occupies residues Met1–Ala19. Residue Cys20 is the site of N-palmitoyl cysteine attachment. A lipid anchor (S-diacylglycerol cysteine) is attached at Cys20. The region spanning Glu136–Asn229 is the PpiC domain.

Belongs to the PrsA family.

It is found in the cell membrane. It carries out the reaction [protein]-peptidylproline (omega=180) = [protein]-peptidylproline (omega=0). In terms of biological role, plays a major role in protein secretion by helping the post-translocational extracellular folding of several secreted proteins. This is Foldase protein PrsA from Pediococcus pentosaceus (strain ATCC 25745 / CCUG 21536 / LMG 10740 / 183-1w).